The chain runs to 310 residues: MIFTGTANTRLAVDVVNHLDMSLGKMTVGRFSDGEVMVEINENVRGKDVFVLQPTCAPTNDNLMEIMVMVDALRRASAGRITAAIPYFGYARQDRRPRSARVAISAKVVANMLQVAGVDRVLTMDLHADQIQGFFDIPVDNIYAGPILLGDIWRRNFSNLVVVSPDIGGVVRARALAKQLEADLAIIDKRRPRANVSEVMNIIGEVDGRTCIIMDDMVDTAGTLCKAAQALKDRGAGAVYAYCTHPVLSGGAIERIETSSLDELVVTDTIPLSEQGQACGKIRQLSCAALLGETILRISNAESVSSLFAD.

ATP-binding positions include 33–35 and 92–93; these read DGE and RQ. Residues H127 and D166 each contribute to the Mg(2+) site. The active site involves K189. Residues R191, D215, and 219–223 each bind D-ribose 5-phosphate; that span reads DTAGT.

Belongs to the ribose-phosphate pyrophosphokinase family. Class I subfamily. As to quaternary structure, homohexamer. The cofactor is Mg(2+).

It is found in the cytoplasm. The enzyme catalyses D-ribose 5-phosphate + ATP = 5-phospho-alpha-D-ribose 1-diphosphate + AMP + H(+). Its pathway is metabolic intermediate biosynthesis; 5-phospho-alpha-D-ribose 1-diphosphate biosynthesis; 5-phospho-alpha-D-ribose 1-diphosphate from D-ribose 5-phosphate (route I): step 1/1. Functionally, involved in the biosynthesis of the central metabolite phospho-alpha-D-ribosyl-1-pyrophosphate (PRPP) via the transfer of pyrophosphoryl group from ATP to 1-hydroxyl of ribose-5-phosphate (Rib-5-P). This Bordetella parapertussis (strain 12822 / ATCC BAA-587 / NCTC 13253) protein is Ribose-phosphate pyrophosphokinase.